The sequence spans 192 residues: Phosphoheptose isomerase (192 aa).

The region spanning 34-192 (VVDAYRAGNK…VERELFLKGN (159 aa)) is the SIS domain. Residue 49 to 51 (NGG) coordinates substrate. 2 residues coordinate Zn(2+): His58 and Glu62. Substrate contacts are provided by residues Glu62, 91-92 (ND), 117-119 (STS), Ser122, and Gln169. Zn(2+)-binding residues include Gln169 and His177.

The protein belongs to the SIS family. GmhA subfamily. As to quaternary structure, homotetramer. Zn(2+) is required as a cofactor.

It localises to the cytoplasm. It carries out the reaction 2 D-sedoheptulose 7-phosphate = D-glycero-alpha-D-manno-heptose 7-phosphate + D-glycero-beta-D-manno-heptose 7-phosphate. Its pathway is carbohydrate biosynthesis; D-glycero-D-manno-heptose 7-phosphate biosynthesis; D-glycero-alpha-D-manno-heptose 7-phosphate and D-glycero-beta-D-manno-heptose 7-phosphate from sedoheptulose 7-phosphate: step 1/1. Its function is as follows. Catalyzes the isomerization of sedoheptulose 7-phosphate in D-glycero-D-manno-heptose 7-phosphate. The chain is Phosphoheptose isomerase from Geobacter sp. (strain M21).